A 154-amino-acid chain; its full sequence is Myoglobin (154 aa).

Positions Gly2–Lys148 constitute a Globin domain. Ser4 carries the post-translational modification Phosphoserine. His65 contacts nitrite. O2 is bound at residue His65. Phosphothreonine is present on Thr68. His94 serves as a coordination point for heme b.

This sequence belongs to the globin family. In terms of assembly, monomeric.

The protein localises to the cytoplasm. It is found in the sarcoplasm. It catalyses the reaction Fe(III)-heme b-[protein] + nitric oxide + H2O = Fe(II)-heme b-[protein] + nitrite + 2 H(+). The enzyme catalyses H2O2 + AH2 = A + 2 H2O. In terms of biological role, monomeric heme protein which primary function is to store oxygen and facilitate its diffusion within muscle tissues. Reversibly binds oxygen through a pentacoordinated heme iron and enables its timely and efficient release as needed during periods of heightened demand. Depending on the oxidative conditions of tissues and cells, and in addition to its ability to bind oxygen, it also has a nitrite reductase activity whereby it regulates the production of bioactive nitric oxide. Under stress conditions, like hypoxia and anoxia, it also protects cells against reactive oxygen species thanks to its pseudoperoxidase activity. The polypeptide is Myoglobin (MB) (Indopacetus pacificus (Longman's beaked whale)).